Consider the following 125-residue polypeptide: Small ribosomal subunit protein uS13 (125 aa).

The segment at 93 to 125 is disordered; the sequence is RRGLPVRGQRTKTNARTRKGPKRTVAGKKKAGR.

Belongs to the universal ribosomal protein uS13 family. Part of the 30S ribosomal subunit. Forms a loose heterodimer with protein S19. Forms two bridges to the 50S subunit in the 70S ribosome.

Located at the top of the head of the 30S subunit, it contacts several helices of the 16S rRNA. In the 70S ribosome it contacts the 23S rRNA (bridge B1a) and protein L5 of the 50S subunit (bridge B1b), connecting the 2 subunits; these bridges are implicated in subunit movement. Contacts the tRNAs in the A and P-sites. The sequence is that of Small ribosomal subunit protein uS13 from Renibacterium salmoninarum (strain ATCC 33209 / DSM 20767 / JCM 11484 / NBRC 15589 / NCIMB 2235).